We begin with the raw amino-acid sequence, 280 residues long: Energy-coupling factor transporter ATP-binding protein EcfA1 (280 aa).

The ABC transporter domain maps to 6–241; sequence LRTENISFQY…SHMLQEIGLD (236 aa). An ATP-binding site is contributed by 40–47; sequence GQNGSGKS.

This sequence belongs to the ABC transporter superfamily. Energy-coupling factor EcfA family. As to quaternary structure, forms a stable energy-coupling factor (ECF) transporter complex composed of 2 membrane-embedded substrate-binding proteins (S component), 2 ATP-binding proteins (A component) and 2 transmembrane proteins (T component).

It is found in the cell membrane. Functionally, ATP-binding (A) component of a common energy-coupling factor (ECF) ABC-transporter complex. Unlike classic ABC transporters this ECF transporter provides the energy necessary to transport a number of different substrates. The protein is Energy-coupling factor transporter ATP-binding protein EcfA1 of Bacillus thuringiensis subsp. konkukian (strain 97-27).